Here is a 61-residue protein sequence, read N- to C-terminus: Large ribosomal subunit protein uL30 (61 aa).

Belongs to the universal ribosomal protein uL30 family. As to quaternary structure, part of the 50S ribosomal subunit.

The sequence is that of Large ribosomal subunit protein uL30 from Mycobacterium sp. (strain KMS).